The following is a 372-amino-acid chain: Probable NADH-dependent flavin oxidoreductase YqiG (372 aa).

The protein belongs to the NADH:flavin oxidoreductase/NADH oxidase family.

This chain is Probable NADH-dependent flavin oxidoreductase YqiG (yqiG), found in Bacillus subtilis (strain 168).